A 401-amino-acid chain; its full sequence is Arylacetamide deacetylase-like 2 (401 aa).

The signal sequence occupies residues 1–18 (MGLKALCLGLLCVLFVSH). The Involved in the stabilization of the negatively charged intermediate by the formation of the oxyanion hole motif lies at 111–113 (HGG). An intrachain disulfide couples Cys-116 to Cys-338. Residues Ser-189, Asp-341, and His-371 contribute to the active site.

The protein belongs to the 'GDXG' lipolytic enzyme family.

It is found in the secreted. The protein is Arylacetamide deacetylase-like 2 (AADACL2) of Homo sapiens (Human).